Here is a 20-residue protein sequence, read N- to C-terminus: Apidaecin 3+ (20 aa).

The tract at residues 1–20 (GKPSRPRPAPIQPRPPHPRL) is disordered.

It belongs to the apidaecin family.

It localises to the secreted. Functionally, antimicrobial peptide active against many Gram-negative enterobacterial and plant-associated bacterial species. Not active against other bacterial species like H.pylori, P.mirabilis, B.pertussis or N.gonorrhoeae. Its function is as follows. Among others, also active against S.typhi. In terms of biological role, not active against S.typhi. This Pimpla disparis (Parasitic wasp) protein is Apidaecin 3+.